Consider the following 777-residue polypeptide: Aconitate hydratase, mitochondrial (777 aa).

Substrate-binding positions include Q96 and 189-191; that span reads DSH. The [4Fe-4S] cluster site is built by C383, C446, and C449. Residues R472, R477, R605, and 668–669 contribute to the substrate site; that span reads SR.

The protein belongs to the aconitase/IPM isomerase family. As to quaternary structure, monomer. Requires [4Fe-4S] cluster as cofactor.

Its subcellular location is the mitochondrion. It catalyses the reaction citrate = D-threo-isocitrate. Its pathway is carbohydrate metabolism; tricarboxylic acid cycle; isocitrate from oxaloacetate: step 2/2. Its function is as follows. Catalyzes the isomerization of citrate to isocitrate via cis-aconitate, a step in the citric acid cycle. The protein is Aconitate hydratase, mitochondrial (ACO1) of Candida albicans (strain SC5314 / ATCC MYA-2876) (Yeast).